The sequence spans 896 residues: Pentatricopeptide repeat-containing protein At5g03800 (896 aa).

PPR repeat units lie at residues 113 to 143 (KTRL…LSSP), 144 to 178 (TVVS…GLVQ), 180 to 214 (NEYT…GFLN), 215 to 247 (SVFV…IPQR), 248 to 278 (DVAS…MNRV), 284 to 318 (DSFT…GLMQ), 319 to 349 (ELSV…MMAQ), 350 to 380 (DAVT…VTEK), 381 to 415 (NTIT…GVEL), 416 to 450 (TDFS…GTAF), 451 to 481 (NPCI…WPSN), 484 to 519 (SSKA…KLFL), 520 to 554 (DEVS…GYFS), 555 to 585 (DISL…MREH), 586 to 620 (DVIS…EIKP), 621 to 653 (DIIT…MKTI), and 659 to 689 (TTEH…MPVQ). The tract at residues 694 to 769 (VLRALLDSCR…HPAKSWIIHE (76 aa)) is type E motif. Residues 770-800 (NKIHSFHARDTSHPQEKDIYRGLEILIMECL) form a type E(+) motif region. The interval 801 to 896 (KVGYEPNTEY…NGKCSCRDLW (96 aa)) is type DYW motif.

This sequence belongs to the PPR family. PCMP-H subfamily.

In terms of biological role, may play a role in embryogenesis. The polypeptide is Pentatricopeptide repeat-containing protein At5g03800 (EMB175) (Arabidopsis thaliana (Mouse-ear cress)).